Consider the following 812-residue polypeptide: Leucine-rich repeat-containing protein 41 (812 aa).

Positions 45–54 are interaction with Elongin BC complex; the sequence is ALFELCGRAV. Phosphoserine is present on residues Ser-155, Ser-276, and Ser-326. A disordered region spans residues 267-408; it reads GEASRGRAPS…GARTRQGPGA (142 aa). Thr-327 is modified (phosphothreonine). The span at 354–381 shows a compositional bias: low complexity; it reads TKRSPSAPAATSSASSSTSSYKRAPASS. Phosphoserine is present on residues Ser-357 and Ser-373. The segment covering 387-401 has biased composition (basic residues); the sequence is PLKRFKRAAGKKGAR. 7 LRR repeats span residues 487–507, 518–530, 531–555, 613–635, 636–659, 701–728, and 731–752; these read WVSLESLTLSYNGLGSNIFRL, AGCRLRALHLSDL, FSPLPILELTRAIVRALPLLRVLSI, SGSLQQLSLDSATFASPQDFGLV, LQTLKEYNLALKRLSFHDMNLADC, NSTLKGLRLPGNRLGNAGLLALADVFSE, and SSSLCQLDISSNCIKPDGLLEF.

In terms of assembly, part of an E3 ubiquitin-protein ligase complex with Elongin BC (ELOB and ELOC), RBX1 and CUL5. Component of a probable ECS(LRRC41) complex which contains CUL5, RNF7/RBX2, Elongin BC and LRRC41. Interacts with CUL5, RNF7, ELOB and ELOC.

It participates in protein modification; protein ubiquitination. In terms of biological role, probable substrate recognition component of an ECS (Elongin BC-CUL2/5-SOCS-box protein) E3 ubiquitin ligase complex which mediates the ubiquitination and subsequent proteasomal degradation of target proteins. In Homo sapiens (Human), this protein is Leucine-rich repeat-containing protein 41 (LRRC41).